A 458-amino-acid polypeptide reads, in one-letter code: MALAINVSSSSSSAISSSSFPSSDLKVTKIGSLRLLNRTNVSAASLSLSGKRSSVKALNVQSITKESIVASEVTEKLDVVEVEDFEELAKRLENASPLEIMDKALEKFGNDIAIAFSGAEDVALIEYAHLTGRPYRVFSLDTGRLNPETYRLFDTVEKHYGIRIEYMFPDAVEVQALVRNKGLFSFYEDGHQECCRIRKVRPLRRALKGLRAWITGQRKDQSPGTRSEIPVVQVDPVFEGLDGGVGSLVKWNPVANVEGNDVWNFLRTMDVPVNTLHAAGYVSIGCEPCTRAVLPGQHEREGRWWWEDAKAKECGLHKGNIKENTNGNATANVNGTASVADIFNSENVVNLSRQGIENLMKLENRKEAWIVVLYAPWCPFCQAMEASFDELADKLGGSGVKVAKFRADGDQKDFAKKELQLGSFPTILVFPKNSSRPIKYPSEKRDVDSLTSFLNLVR.

Positions 1-24 (MALAINVSSSSSSAISSSSFPSSD) are disordered. The N-terminal 69 residues, 1-69 (MALAINVSSS…VQSITKESIV (69 aa)), are a transit peptide targeting the chloroplast. The segment covering 8 to 23 (SSSSSSAISSSSFPSS) has biased composition (low complexity). Residues 70 to 319 (ASEVTEKLDV…KAKECGLHKG (250 aa)) are reductase domain. Residues 337 to 458 (ASVADIFNSE…SLTSFLNLVR (122 aa)) form the Thioredoxin domain. Active-site nucleophile residues include Cys378 and Cys381. An intrachain disulfide couples Cys378 to Cys381.

The protein belongs to the APS reductase family. [4Fe-4S] cluster is required as a cofactor. In terms of tissue distribution, leaves, roots and stem.

The protein localises to the plastid. Its subcellular location is the chloroplast. The enzyme catalyses glutathione disulfide + sulfite + AMP + 2 H(+) = adenosine 5'-phosphosulfate + 2 glutathione. Stimulated by sodium sulfate &gt; ammonium sulfate. In terms of biological role, reduces sulfate for Cys biosynthesis. Substrate preference is adenosine-5'-phosphosulfate (APS) &gt;&gt; 3'-phosphoadenosine-5'-phosphosulfate (PAPS). Uses glutathione or DTT as source of protons. The polypeptide is 5'-adenylylsulfate reductase 3, chloroplastic (APR3) (Arabidopsis thaliana (Mouse-ear cress)).